Reading from the N-terminus, the 133-residue chain is p53 and DNA damage-regulated protein 1 (133 aa).

This sequence belongs to the prefoldin subunit beta family. In terms of assembly, component of the PAQosome complex which is responsible for the biogenesis of several protein complexes and which consists of R2TP complex members RUVBL1, RUVBL2, RPAP3 and PIH1D1, URI complex members PFDN2, PFDN6, PDRG1, UXT and URI1 as well as ASDURF, POLR2E and DNAAF10/WDR92.

The protein resides in the cytoplasm. Its function is as follows. May play a role in chaperone-mediated protein folding. The sequence is that of p53 and DNA damage-regulated protein 1 (Pdrg1) from Mus musculus (Mouse).